Reading from the N-terminus, the 373-residue chain is ORC1-type DNA replication protein 2 (373 aa).

ATP-binding positions include 63–67 (TGKTS), Y205, and R217.

The protein belongs to the CDC6/cdc18 family.

Functionally, involved in regulation of DNA replication. The protein is ORC1-type DNA replication protein 2 (cdc6-2) of Methanosarcina acetivorans (strain ATCC 35395 / DSM 2834 / JCM 12185 / C2A).